A 925-amino-acid polypeptide reads, in one-letter code: Collagen alpha-2(I) chain (925 aa).

A disordered region spans residues 1 to 925; sequence SGGFDFSFLP…FGYEGDFYRA (925 aa). Pro-10 and Pro-13 each carry 4-hydroxyproline. Residues 22-34 show a composition bias toward gly residues; it reads RYYGVGLGPGPMG. Residues 35–74 are compositionally biased toward low complexity; sequence LMGPRGPPGASGAPGPQGFQGPAGEPGEPGQTGPAGARGP. 4-hydroxyproline is present on residues Pro-42 and Pro-48. Lys-103 bears the 5-hydroxylysine; alternate mark. An O-linked (Gal...) hydroxylysine; alternate glycan is attached at Lys-103. A compositionally biased stretch (low complexity) spans 154–171; the sequence is DGSVGPVGPAGPIGSAGP. Residues 271–280 are compositionally biased toward gly residues; that stretch reads GESGGKGEPG. Residues 281 to 291 are compositionally biased toward low complexity; the sequence is SAGPQGPPGSS. The segment covering 306 to 315 has biased composition (gly residues); sequence GLRGGPGSRG. 3 positions are modified to 4-hydroxyproline: Pro-317, Pro-332, and Pro-335. Residues 363–379 are compositionally biased toward low complexity; that stretch reads IDGRPGPIGPAGARGEA. Residues 423 to 432 are compositionally biased toward gly residues; that stretch reads GVQGGKGEQG. Low complexity-rich tracts occupy residues 479 to 496 and 508 to 518; these read PGES…SRGP and EPGVVGAPGTA. The span at 519 to 528 shows a compositional bias: gly residues; it reads GPAGSGGLPG. Composition is skewed to low complexity over residues 551–595 and 602–622; these read VGTT…PRGS and VGPA…QPGA. The segment covering 623 to 632 has biased composition (basic and acidic residues); the sequence is KGERGTKGPK. The span at 640-650 shows a compositional bias: low complexity; the sequence is PTGPVGSAGPA. Gly residues predominate over residues 660 to 669; it reads GSRGDGGPPG. The span at 671 to 680 shows a compositional bias: low complexity; it reads TGFPGAAGRT. Positions 696–718 are enriched in gly residues; it reads GAAGKGDQGPVGRGETGAGGPPG. 2 stretches are compositionally biased toward low complexity: residues 719 to 753 and 761 to 771; these read FTGE…LGLP and LPGVAGAVGEP. A compositionally biased stretch (gly residues) spans 772-782; sequence GPLGIGPPGAR. The segment covering 791–806 has biased composition (low complexity); the sequence is EPGPVGSVGPVGALGP. The span at 816 to 827 shows a compositional bias: basic and acidic residues; that stretch reads RGDKGEPGEKGP. Over residues 897-907 the composition is skewed to pro residues; it reads PAGPPGPPGPP.

The protein belongs to the fibrillar collagen family. As to quaternary structure, trimers of one alpha 2(I) and two alpha 1(I) chains. Interacts (via C-terminus) with TMEM131 (via PapD-L domain); the interaction is direct and is involved in assembly and TRAPPIII ER-to-Golgi transport complex-dependent secretion of collagen. In terms of processing, prolines at the third position of the tripeptide repeating unit (G-X-Y) are hydroxylated in some or all of the chains. As to expression, expressed in bones.

The protein localises to the secreted. It is found in the extracellular space. Its subcellular location is the extracellular matrix. In terms of biological role, type I collagen is a member of group I collagen (fibrillar forming collagen). The polypeptide is Collagen alpha-2(I) chain (Acratocnus sp. (strain SLP-2019) (Ground sloth)).